The following is a 157-amino-acid chain: Snaclec A16 (157 aa).

Positions 1-23 (MGRLISVSFGLLVVFLSLSGTGA) are cleaved as a signal peptide. Intrachain disulfides connect cysteine 27–cysteine 38, cysteine 55–cysteine 149, and cysteine 124–cysteine 141. The C-type lectin domain occupies 34–150 (YEGHCYKVFN…CELAYHFICM (117 aa)).

It belongs to the snaclec family. In terms of assembly, heterodimer; disulfide-linked. Expressed by the venom gland.

It localises to the secreted. In terms of biological role, interferes with one step of hemostasis (modulation of platelet aggregation, or coagulation cascade, for example). This Macrovipera lebetinus (Levantine viper) protein is Snaclec A16.